Reading from the N-terminus, the 497-residue chain is NAD(P)H-quinone oxidoreductase subunit 2, chloroplastic (497 aa).

14 helical membrane-spanning segments follow: residues 13–33 (VILP…LDLI), 37–57 (SAWL…ALVF), 76–96 (FTIS…LIST), 103–123 (GMGL…GLFL), 129–149 (LVTV…LVGY), 164–184 (LLMG…LYGL), 206–226 (IAVW…LSAF), 240–260 (PTPV…ALAT), 274–294 (WHVL…LIAA), 311–331 (AGYL…GMIT), 332–352 (YMVT…LFGL), 373–393 (AFCL…AGFF), 406–426 (GLYL…YYYL), and 462–482 (VGIA…NPII).

The protein belongs to the complex I subunit 2 family. NDH is composed of at least 16 different subunits, 5 of which are encoded in the nucleus.

It is found in the plastid. The protein resides in the chloroplast thylakoid membrane. The catalysed reaction is a plastoquinone + NADH + (n+1) H(+)(in) = a plastoquinol + NAD(+) + n H(+)(out). The enzyme catalyses a plastoquinone + NADPH + (n+1) H(+)(in) = a plastoquinol + NADP(+) + n H(+)(out). Its function is as follows. NDH shuttles electrons from NAD(P)H:plastoquinone, via FMN and iron-sulfur (Fe-S) centers, to quinones in the photosynthetic chain and possibly in a chloroplast respiratory chain. The immediate electron acceptor for the enzyme in this species is believed to be plastoquinone. Couples the redox reaction to proton translocation, and thus conserves the redox energy in a proton gradient. This Zygnema circumcarinatum (Green alga) protein is NAD(P)H-quinone oxidoreductase subunit 2, chloroplastic.